A 241-amino-acid chain; its full sequence is Small ribosomal subunit protein uS3 (241 aa).

The KH type-2 domain maps to 39–107 (IRKYLEKELK…ETHLNIVEVR (69 aa)). The disordered stretch occupies residues 214–241 (ASERRATEGDAAHGGGGDRERGRRRENA).

Belongs to the universal ribosomal protein uS3 family. Part of the 30S ribosomal subunit. Forms a tight complex with proteins S10 and S14.

In terms of biological role, binds the lower part of the 30S subunit head. Binds mRNA in the 70S ribosome, positioning it for translation. The sequence is that of Small ribosomal subunit protein uS3 from Mesorhizobium japonicum (strain LMG 29417 / CECT 9101 / MAFF 303099) (Mesorhizobium loti (strain MAFF 303099)).